A 215-amino-acid polypeptide reads, in one-letter code: Pyrrolidone-carboxylate peptidase (215 aa).

Residues Glu80, Cys143, and His167 contribute to the active site.

It belongs to the peptidase C15 family. Homotetramer.

The protein localises to the cytoplasm. It catalyses the reaction Release of an N-terminal pyroglutamyl group from a polypeptide, the second amino acid generally not being Pro.. In terms of biological role, removes 5-oxoproline from various penultimate amino acid residues except L-proline. This chain is Pyrrolidone-carboxylate peptidase, found in Yersinia pseudotuberculosis serotype O:1b (strain IP 31758).